We begin with the raw amino-acid sequence, 440 residues long: Adenylosuccinate synthetase (440 aa).

GTP is bound by residues 14-20 (GDEGKGK) and 42-44 (GHT). D15 serves as the catalytic Proton acceptor. The Mg(2+) site is built by D15 and G42. Residues 15–18 (DEGK), 40–43 (NAGH), T131, R145, Q226, T241, and R313 contribute to the IMP site. H43 (proton donor) is an active-site residue. 309-315 (ATTGRQR) contacts substrate. GTP is bound by residues R315, 341–343 (KLD), and 423–425 (STG).

It belongs to the adenylosuccinate synthetase family. In terms of assembly, homodimer. It depends on Mg(2+) as a cofactor.

It localises to the cytoplasm. The catalysed reaction is IMP + L-aspartate + GTP = N(6)-(1,2-dicarboxyethyl)-AMP + GDP + phosphate + 2 H(+). It functions in the pathway purine metabolism; AMP biosynthesis via de novo pathway; AMP from IMP: step 1/2. Functionally, plays an important role in the de novo pathway of purine nucleotide biosynthesis. Catalyzes the first committed step in the biosynthesis of AMP from IMP. The polypeptide is Adenylosuccinate synthetase (Hydrogenovibrio crunogenus (strain DSM 25203 / XCL-2) (Thiomicrospira crunogena)).